A 276-amino-acid chain; its full sequence is Lectin-like protein At3g16530 (276 aa).

The first 19 residues, 1-19 (MQIHKLCFLVLFLANAAFA), serve as a signal peptide directing secretion. The tract at residues 20-270 (VKFNFDSFDG…RHDIWSWSFE (251 aa)) is legume-lectin like. Residues Asn-79, Asn-129, and Asn-196 are each glycosylated (N-linked (GlcNAc...) asparagine).

It belongs to the leguminous lectin family.

It localises to the secreted. The protein localises to the extracellular space. The protein resides in the apoplast. The chain is Lectin-like protein At3g16530 from Arabidopsis thaliana (Mouse-ear cress).